The primary structure comprises 722 residues: 1,4-alpha-glucan branching enzyme GlgB (722 aa).

The active-site Nucleophile is Asp-401. Glu-454 serves as the catalytic Proton donor.

It belongs to the glycosyl hydrolase 13 family. GlgB subfamily. Monomer.

The catalysed reaction is Transfers a segment of a (1-&gt;4)-alpha-D-glucan chain to a primary hydroxy group in a similar glucan chain.. It functions in the pathway glycan biosynthesis; glycogen biosynthesis. In terms of biological role, catalyzes the formation of the alpha-1,6-glucosidic linkages in glycogen by scission of a 1,4-alpha-linked oligosaccharide from growing alpha-1,4-glucan chains and the subsequent attachment of the oligosaccharide to the alpha-1,6 position. The sequence is that of 1,4-alpha-glucan branching enzyme GlgB from Rubrobacter xylanophilus (strain DSM 9941 / JCM 11954 / NBRC 16129 / PRD-1).